The sequence spans 344 residues: L-rhamnose-proton symporter (344 aa).

Transmembrane regions (helical) follow at residues 4-24, 38-58, 74-94, 101-121, 137-157, 175-195, 214-234, 259-279, 290-310, and 323-343; these read AITMGIFWHLIGAASAACFYA, WSVGGIVSWIILPWAISALLL, LPVFLFGAMWGIGNINYGLTM, MGIGIAIGITLIVGTLMTPII, TLLGVLVALIGVGIVTRAGQL, LVLAVMCGIFSAGMSFAMNAA, LPSYVVIMGGGAIINLGFCFI, VLLSTLGGLMWYLQFFFYAWG, ISWMLHMSFYVLCGGIVGLVL, and VLSLGCVVIIVAANIVGIGMA.

It belongs to the L-rhamnose transporter (TC 2.A.7.6) family.

The protein localises to the cell inner membrane. The catalysed reaction is L-rhamnopyranose(in) + H(+)(in) = L-rhamnopyranose(out) + H(+)(out). In terms of biological role, uptake of L-rhamnose across the cytoplasmic membrane with the concomitant transport of protons into the cell (symport system). This chain is L-rhamnose-proton symporter, found in Escherichia coli (strain K12 / MC4100 / BW2952).